The sequence spans 589 residues: EZH inhibitory protein (589 aa).

Disordered stretches follow at residues methionine 1–arginine 46, alanine 61–asparagine 548, and leucine 561–glycine 589. Gly residues-rich tracts occupy residues glycine 29–glycine 38 and proline 105–glycine 114. The span at glycine 147–alanine 161 shows a compositional bias: low complexity. Residues leucine 193–threonine 204 are compositionally biased toward polar residues. 4 stretches are compositionally biased toward low complexity: residues arginine 299–glutamate 308, arginine 325–glutamate 334, arginine 351–glutamate 360, and proline 374–serine 390. A Phosphoserine modification is found at serine 306. Residues methionine 426–glutamate 437 are compositionally biased toward basic and acidic residues. Acidic residues predominate over residues serine 438–serine 449. The span at glutamate 450–arginine 465 shows a compositional bias: low complexity. The segment at arginine 482–serine 490 is sufficient for interaction with EZH2. Positions proline 484–lysine 503 are necessary and sufficient for inhibition of PRC2/EED-EZH1 and PRC2/EED-EZH2 complex activity. Residues valine 509 to proline 547 show a composition bias toward low complexity. The segment covering alanine 575–glycine 589 has biased composition (basic and acidic residues).

Interacts with PRC2/EED-EZH1 complex member EZH1 and with PRC2/EED-EZH2 complex member EZH2; the interaction blocks EZH1/EZH2 methyltransferase activity. Interacts (via C-terminus) with SUZ12 which is a member of the PRC2/EED-EZH1 and PRC2/EED-EZH2 complexes. In terms of tissue distribution, highly expressed in ovary with lower expression in testis and very low levels in other tissues tested including prostate, brain, kidney, spleen and liver. During spermatogenesis, expressed mainly in spermatogonia with very low expression in spermatocytes I and II.

The protein localises to the nucleus. Its subcellular location is the cytoplasm. Functionally, inhibits PRC2/EED-EZH1 and PRC2/EED-EZH2 complex function by inhibiting EZH1/EZH2 methyltransferase activity, thereby causing down-regulation of histone H3 trimethylation at 'Lys-27' (H3K27me3). Probably inhibits methyltransferase activity by limiting the stimulatory effect of cofactors such as AEBP2 and JARID2. Inhibits H3K27me3 deposition during spermatogenesis and oogenesis. The polypeptide is EZH inhibitory protein (Mus musculus (Mouse)).